Reading from the N-terminus, the 452-residue chain is Activating transcription factor 7-interacting protein 2 (452 aa).

At S184 the chain carries Phosphoserine. Residues R185–K206 are disordered. At S257 the chain carries Phosphoserine. The Fibronectin type-III domain occupies P346–N450.

This sequence belongs to the MCAF family. In terms of assembly, interacts with MBD1, SETDB1 and SP1. Probably forms a complex with SETDB1 and MBD1. As to expression, expressed in testis.

Its subcellular location is the nucleus. Its function is as follows. Recruiter that couples transcriptional factors to general transcription apparatus and thereby modulates transcription regulation and chromatin formation. Can both act as an activator or a repressor depending on the context. Mediates MBD1-dependent transcriptional repression, probably by recruiting complexes containing SETDB1. The complex formed with MBD1 and SETDB1 represses transcription and probably couples DNA methylation and histone H3 'Lys-9' trimethylation (H3K9me3) activity. This Mus musculus (Mouse) protein is Activating transcription factor 7-interacting protein 2 (Atf7ip2).